A 564-amino-acid polypeptide reads, in one-letter code: MALSGQDWRRHQSHRQHRNHRTQGNHQKLISTATLTLFVLFLSSWIAYAAGKATVPAPLVEGETESATSQDFNSSSAFLGAIASASSTGSGSGSGSGSGSGSGSGSYGLASMNSSPIAIVSYQGITSSNLGDSNTTLVPLSDTPLLLEEFAAGEFVLPPLTSIFVSIVLLIVILGTVVGNVLVCIAVCMVRKLRRPCNYLLVSLALSDLCVALLVMPMALLYEVLEKWNFGPLLCDIWVSFDVLCCTASILNLCAISVDRYLAITKPLEYGVKRTPRRMMLCVGIVWLAAACISLPPLLILGNEHEDEEGQPICTVCQNFAYQIYATLGSFYIPLSVMLFVYYQIFRAARRIVLEEKRAQTHLQQALNGTGSPSAPQAPPLGHTELASSGNGQRHSSVGNTSLTYSTCGGLSSGGGALAGHGSGGGVSGSTGLLGSPHHKKLRFQLAKEKKASTTLGIIMSAFTVCWLPFFILALIRPFETMHVPASLSSLFLWLGYANSLLNPIIYATLNRDFRKPFQEILYFRCSSLNTMMRENYYQDQYGEPPSQRVMLGDERHGARESFL.

The segment at 1–26 is disordered; it reads MALSGQDWRRHQSHRQHRNHRTQGNH. Residues 11 to 23 are compositionally biased toward basic residues; the sequence is HQSHRQHRNHRTQ. Residues 29–51 traverse the membrane as a helical segment; that stretch reads LISTATLTLFVLFLSSWIAYAAG. Repeat copies occupy residues 89–90, 91–92, 93–94, 95–96, 97–98, 99–100, 101–102, 103–104, and 105–106. Positions 89-106 are 9 X 2 AA tandem repeats of G-S; that stretch reads GSGSGSGSGSGSGSGSGS. A helical membrane pass occupies residues 165 to 188; it reads VSIVLLIVILGTVVGNVLVCIAVC. Residues 189–198 are Cytoplasmic-facing; sequence MVRKLRRPCN. A helical transmembrane segment spans residues 199–222; the sequence is YLLVSLALSDLCVALLVMPMALLY. Over 223 to 236 the chain is Extracellular; the sequence is EVLEKWNFGPLLCD. A disulfide bridge links Cys-235 with Cys-314. The helical transmembrane segment at 237-258 threads the bilayer; that stretch reads IWVSFDVLCCTASILNLCAISV. An agonist binding region spans residues 238-247; sequence WVSFDVLCCT. Ergotamine is bound by residues Asp-242 and Thr-247. Positions 259-261 match the DRY motif; important for ligand-induced conformation changes motif; that stretch reads DRY. The Cytoplasmic segment spans residues 259-278; that stretch reads DRYLAITKPLEYGVKRTPRR. A helical membrane pass occupies residues 279–302; it reads MMLCVGIVWLAAACISLPPLLILG. At 303 to 330 the chain is on the extracellular side; that stretch reads NEHEDEEGQPICTVCQNFAYQIYATLGS. A helical transmembrane segment spans residues 331–353; it reads FYIPLSVMLFVYYQIFRAARRIV. At 354-454 the chain is on the cytoplasmic side; the sequence is LEEKRAQTHL…QLAKEKKAST (101 aa). A disordered region spans residues 367-396; the sequence is LNGTGSPSAPQAPPLGHTELASSGNGQRHS. Residues 386 to 396 are compositionally biased toward polar residues; sequence LASSGNGQRHS. Residues 455 to 476 traverse the membrane as a helical segment; sequence TLGIIMSAFTVCWLPFFILALI. At 477–487 the chain is on the extracellular side; it reads RPFETMHVPAS. Residues 488-510 form a helical membrane-spanning segment; it reads LSSLFLWLGYANSLLNPIIYATL. The NPxxY motif; important for ligand-induced conformation changes and signaling signature appears at 503–507; that stretch reads NPIIY. Residues 511 to 564 lie on the Cytoplasmic side of the membrane; sequence NRDFRKPFQEILYFRCSSLNTMMRENYYQDQYGEPPSQRVMLGDERHGARESFL.

It belongs to the G-protein coupled receptor 1 family. 5-hydroxytryptamine receptor subfamily. Expressed predominantly in adult heads.

Its subcellular location is the cell membrane. Its function is as follows. G-protein coupled receptor for 5-hydroxytryptamine (serotonin). Also functions as a receptor for various alkaloids. Ligand binding causes a conformation change that triggers signaling via guanine nucleotide-binding proteins (G proteins) and modulates the activity of down-stream effectors, such as adenylate cyclase. Signaling activates adenylate cyclase activity. This chain is 5-hydroxytryptamine receptor 1 (5-HT7), found in Drosophila melanogaster (Fruit fly).